Here is a 297-residue protein sequence, read N- to C-terminus: HTH-type transcriptional regulator ArgP (297 aa).

One can recognise an HTH lysR-type domain in the interval 4 to 60 (PDYRTLQALDAVIRERGFERAAQKLCITQSAVSQRIKQLENMFGQPLLVRTVPPRPT). The segment at residues 21-40 (FERAAQKLCITQSAVSQRIK) is a DNA-binding region (H-T-H motif).

This sequence belongs to the LysR transcriptional regulatory family. Homodimer.

Its function is as follows. Controls the transcription of genes involved in arginine and lysine metabolism. This Escherichia coli O127:H6 (strain E2348/69 / EPEC) protein is HTH-type transcriptional regulator ArgP.